A 450-amino-acid polypeptide reads, in one-letter code: Oxygen-independent coproporphyrinogen III oxidase (450 aa).

In terms of domain architecture, Radical SAM core spans 45-282; it reads IPAGGSISLY…RTLILWDGYQ (238 aa). An S-adenosyl-L-methionine-binding site is contributed by Tyr54. [4Fe-4S] cluster contacts are provided by Cys60 and Cys64. An S-adenosyl-L-methionine-binding site is contributed by Phe66. Cys67 is a binding site for [4Fe-4S] cluster. Residues Gly111, 112–113, Glu144, Gln171, Arg183, Asp208, Ala242, and Ile328 contribute to the S-adenosyl-L-methionine site; that span reads GT.

It belongs to the anaerobic coproporphyrinogen-III oxidase family. As to quaternary structure, monomer. [4Fe-4S] cluster serves as cofactor.

The protein resides in the cytoplasm. The enzyme catalyses coproporphyrinogen III + 2 S-adenosyl-L-methionine = protoporphyrinogen IX + 2 5'-deoxyadenosine + 2 L-methionine + 2 CO2. It functions in the pathway porphyrin-containing compound metabolism; protoporphyrin-IX biosynthesis; protoporphyrinogen-IX from coproporphyrinogen-III (AdoMet route): step 1/1. Its function is as follows. Involved in the heme and chlorophyll biosynthesis. Catalyzes the anaerobic oxidative decarboxylation of propionate groups of rings A and B of coproporphyrinogen III to yield the vinyl groups in protoporphyrinogen IX. The chain is Oxygen-independent coproporphyrinogen III oxidase (hemZ) from Cereibacter sphaeroides (strain ATCC 17023 / DSM 158 / JCM 6121 / CCUG 31486 / LMG 2827 / NBRC 12203 / NCIMB 8253 / ATH 2.4.1.) (Rhodobacter sphaeroides).